Consider the following 267-residue polypeptide: Cysteine protease avirulence protein AvrPphB (267 aa).

Residue glycine 63 is the site of N-myristoyl glycine; by host attachment. Residues cysteine 98, histidine 212, and aspartate 227 contribute to the active site.

Belongs to the peptidase C58 family. As to quaternary structure, in infected plant cells, the 28 kDa product interacts with PBS1. Autocleaved. This function is essential for myristoylation in infected plant cell and for eliciting the plant hypersensitive response. In terms of processing, myristoylation of 28 kDa product in infected plant cells; it mediates the localization to membranes.

Its subcellular location is the secreted. The protein localises to the host membrane. Its function is as follows. Cysteine protease avirulence protein, which is essential during infection of plant cells from cultivar-specific of beans and Arabidopsis thaliana. The autocleavage of the protein is required for virulence function. May act by affecting the plant defense system. In plants lacking R3 or RPS5 resistance genes, it probably impairs the plant defense system and leads to the bacteria multiplication. In contrast, in plants containing the R3 or RPS5 protein, it is unable to induce disease symptoms, explaining its avirulence name. The 7 kDa product is required for the type-III translocation from Pseudomonas strains to the plant, but are partially dispensable for effector recognition following in planta expression. In infected plants, it acts by cleaving the PBS1 protein, which leads to resistance or disease, depending on the presence or absence of RPS5, respectively. Targets the Arabidopsis kinases PBS1, BIK1, PBL1, PBL2, PBL3, PBL5, PBL7, PBL9 and PBL11 for cleavage in vitro. Can block recognition of AvrB avirulence factor by plant cells by cleaving Arabidopsis RIPK kinase and suppressing Arabidopsis RPM1 activation. Cannot block AvrRpm1-induced activation of RPM1. The protein is Cysteine protease avirulence protein AvrPphB (avrPph3) of Pseudomonas savastanoi pv. phaseolicola (Pseudomonas syringae pv. phaseolicola).